A 313-amino-acid chain; its full sequence is tRNA pseudouridine synthase B (313 aa).

Residue aspartate 48 is the Nucleophile of the active site.

Belongs to the pseudouridine synthase TruB family. Type 1 subfamily.

It catalyses the reaction uridine(55) in tRNA = pseudouridine(55) in tRNA. In terms of biological role, responsible for synthesis of pseudouridine from uracil-55 in the psi GC loop of transfer RNAs. The protein is tRNA pseudouridine synthase B of Saccharophagus degradans (strain 2-40 / ATCC 43961 / DSM 17024).